The sequence spans 944 residues: Serine/threonine-protein kinase PLK4 (944 aa).

In terms of domain architecture, Protein kinase spans 12–265; the sequence is FKVLNLLGKG…LSSVLDHAFM (254 aa). Residues 18-26 and K41 contribute to the ATP site; that span reads LGKGSFACV. The active-site Proton acceptor is D136. 3 disordered regions span residues 327–396, 432–463, and 530–561; these read KDKH…YSER, RSLERHTSPPVKEKTPSEFMGPAKQTAPRSND, and LGIKKNPGTGQRKAEKSQFGEQSKSRVPQQAF. Polar residues predominate over residues 378–394; the sequence is RSGTSQSQTYAKPSSYS. A compositionally biased stretch (basic and acidic residues) spans 432-447; that stretch reads RSLERHTSPPVKEKTP. Positions 548 to 561 are enriched in polar residues; sequence FGEQSKSRVPQQAF. The Cryptic POLO box 1 (CPB1) domain maps to 565–678; that stretch reads TLRSIISPLN…AKFIKLVRSK (114 aa). The Cryptic POLO box 2 (CPB2) domain maps to 679–791; sequence TPKVTYYTRY…GRRPALAESP (113 aa). The disordered stretch occupies residues 786 to 809; the sequence is ALAESPKTQPTPSVDSARERKEEQ. The 79-residue stretch at 862–940 folds into the POLO box domain; it reads QVLKSVFVEN…LSSILMLFAS (79 aa).

The protein belongs to the protein kinase superfamily. Ser/Thr protein kinase family. CDC5/Polo subfamily. Homodimer. Ubiquitinated; leading to its degradation by the proteasome.

Its subcellular location is the cytoplasm. It is found in the cytoskeleton. It localises to the microtubule organizing center. The protein localises to the centrosome. The protein resides in the centriole. The catalysed reaction is L-seryl-[protein] + ATP = O-phospho-L-seryl-[protein] + ADP + H(+). It catalyses the reaction L-threonyl-[protein] + ATP = O-phospho-L-threonyl-[protein] + ADP + H(+). Functionally, serine/threonine-protein kinase that plays a central role in centriole duplication. Able to trigger procentriole formation on the surface of the parental centriole cylinder, leading to the recruitment of centriole biogenesis proteins such as sass6, cpap, ccp110, cep135 and gamma-tubulin. When overexpressed, it is able to induce centrosome amplification through the simultaneous generation of multiple procentrioles adjoining each parental centriole during S phase. Its central role in centriole replication suggests a possible role in tumorigenesis, centrosome aberrations being frequently observed in tumors. Also involved in deuterosome-mediated centriole amplification in multiciliated that can generate more than 100 centrioles. This chain is Serine/threonine-protein kinase PLK4, found in Xenopus laevis (African clawed frog).